A 68-amino-acid chain; its full sequence is uncharacterized protein (68 aa).

A helical membrane pass occupies residues 24–44; the sequence is AHICKCIAMFFVVAGVVLMFF.

Its subcellular location is the endoplasmic reticulum. It localises to the membrane. This is an uncharacterized protein from Saccharomyces cerevisiae (strain ATCC 204508 / S288c) (Baker's yeast).